The primary structure comprises 338 residues: Protein SPATA31F3 (338 aa).

A helical membrane pass occupies residues 7 to 29 (VLWDVGYPLYTYGSICIIALIIW). A Phosphoserine modification is found at Ser152. Positions 290-306 (DRTKNIEKSPTVTKDHV) are enriched in basic and acidic residues. Residues 290–338 (DRTKNIEKSPTVTKDHVWGATTQKTTEDPEAQPPSTEEEGLIFCDAPSA) form a disordered region.

It belongs to the SPATA31 family.

It localises to the membrane. The chain is Protein SPATA31F3 from Homo sapiens (Human).